Here is a 102-residue protein sequence, read N- to C-terminus: Caroteno-chlorophyll a-c-binding protein (102 aa).

E36 and H39 together coordinate chlorophyll a. A helical membrane pass occupies residues 78-98; that stretch reads VLGLIKIVPAGLWGIMIFYAA.

This sequence belongs to the light-harvesting chlorophyll a/b-binding (LHC) protein family. In terms of assembly, the LHC complex consists of chlorophyll a-b binding proteins. Binds at least 14 chlorophylls (8 Chl-a and 6 Chl-b) and carotenoids such as lutein and neoxanthin. is required as a cofactor. Post-translationally, photoregulated by reversible phosphorylation of its threonine residues.

Its subcellular location is the plastid. It localises to the chloroplast thylakoid membrane. The light-harvesting complex (LHC) functions as a light receptor, it captures and delivers excitation energy to photosystems with which it is closely associated. This chain is Caroteno-chlorophyll a-c-binding protein, found in Amphidinium carterae (Dinoflagellate).